We begin with the raw amino-acid sequence, 378 residues long: MKILVDENMPYARDLFSRLGEVTAVPGRPIPVAQLADADALMVRSVTKVNESLLAGKPIKFVGTATAGTDHVDEAWLKQAGIGFSAAPGCNAIAVVEYVFSSLLMLAERDGFSLYDRTVGIVGVGNVGRRLQARLEALGIKTLLCDPPRADRGDEGDFRSLDELVQRADILTFHTPLFKDGPYKTLHLADEKLIRSLKPGAILINACRGAVVDNTALLTCLNEGQKLSVVLDVWEGEPELNVELLKKVDIGTSHIAGYTLEGKARGTTQVFEAYSKFIGHEQHVALDTLLPAPEFGRITLHGPLDQPTLKRLVHLVYDVRRDDAPLRKVAGIPGEFDKLRKNYLERREWSSLYVICDDASAASLLCKLGFNAVHHPAR.

Positions 45 and 66 each coordinate substrate. Asp-146 and Thr-175 together coordinate NAD(+). The active site involves Arg-208. Asp-232 provides a ligand contact to NAD(+). The active site involves Glu-237. His-254 serves as the catalytic Proton donor. Gly-257 contributes to the NAD(+) binding site. Tyr-258 lines the substrate pocket.

Belongs to the D-isomer specific 2-hydroxyacid dehydrogenase family. PdxB subfamily. As to quaternary structure, homodimer.

The protein localises to the cytoplasm. It carries out the reaction 4-phospho-D-erythronate + NAD(+) = (R)-3-hydroxy-2-oxo-4-phosphooxybutanoate + NADH + H(+). The protein operates within cofactor biosynthesis; pyridoxine 5'-phosphate biosynthesis; pyridoxine 5'-phosphate from D-erythrose 4-phosphate: step 2/5. Its function is as follows. Catalyzes the oxidation of erythronate-4-phosphate to 3-hydroxy-2-oxo-4-phosphonooxybutanoate. In Escherichia coli (strain K12 / MC4100 / BW2952), this protein is Erythronate-4-phosphate dehydrogenase.